The primary structure comprises 276 residues: 2,3,4,5-tetrahydropyridine-2,6-dicarboxylate N-succinyltransferase (276 aa).

2 residues coordinate substrate: arginine 104 and aspartate 141.

Belongs to the transferase hexapeptide repeat family. In terms of assembly, homotrimer.

It localises to the cytoplasm. The catalysed reaction is (S)-2,3,4,5-tetrahydrodipicolinate + succinyl-CoA + H2O = (S)-2-succinylamino-6-oxoheptanedioate + CoA. The protein operates within amino-acid biosynthesis; L-lysine biosynthesis via DAP pathway; LL-2,6-diaminopimelate from (S)-tetrahydrodipicolinate (succinylase route): step 1/3. The polypeptide is 2,3,4,5-tetrahydropyridine-2,6-dicarboxylate N-succinyltransferase (Legionella pneumophila (strain Corby)).